We begin with the raw amino-acid sequence, 958 residues long: MPYMPSLSQLQQTDAFLRRHLGPDQGEQQAMLDALGLASREQLIEQTVPPAIRLQGELNLPPALDEQAALAKLKGYAEQNQLWTSLIGMGYHGTITPPVILRNVLENPGWYTAYTPYQPEIAQGRLEALLNYQQMIIDLTGLDLANASLLDEATAAAEAMTLARRMAKSKSNRFFVDENCHPQTLSVVQTRAEAFGFELVVGTLDDLAGHEVFGALLQYPDTHGEIRDLRPAIEQLHAQQALACVAADLLSLLLLTPPGELGADVVLGSTQRFGVPMGYGGPHAAYFASRDEFKRGMPGRIIGVSKDARGNTALRMALQTREQHIRREKANSNICTAQVLLANIAGFYAVYHGPQGLKRIAQRVHRLTAILAAGLEQKGIVRLNRHFFDTLTLEVGGAQTAIIESAEAAQINLRILGRGRLGVSLDETCDERTVEQLLAIFLGADHGLDVAALDAGELAAGIPAGLQRDSGYLEHPVFNSHHSETEMLRYLKQLENKDLALNQAMIPLGSCTMKLNATSEMIPITWAEFANLHPFVPRGQAQGYRLMIEELEAWLCAITGFDAISMQPNSGAQGEYAGLVAIRKYHESRGEGQRDICLIPSSAHGTNPASAQMVSMRVVIVECDKGGNVDLEDLKRKAAEAGDRLSCLMITYPSTHGVYEENVREICAAIHAQGGQVYMDGANLNAQVGLARPADIGADVSHMNLHKTFCIPHGGGGPGMGPIGVKAHLAPFVANHPVVELEGPQPGNGAVSAAPWGSASILPISWMYIAMMGPQLRDATEVAILGANYLANRLGGAFPVLYSGRNGRVAHECILDLRPLKAASGISEEDVAKRLMDYGFHAPTMSFPVPGTLMIEPTESESKAELDRFVEAMLSIRAEIAKVQDGEWPADNNPLVRAPHTLADVIGEWDRPYSIAEAVTPSAHARAHKYWPAVNRVDNVYGDRNLFCACVPVDAYRD.

Position 707 is an N6-(pyridoxal phosphate)lysine (Lys-707).

This sequence belongs to the GcvP family. The glycine cleavage system is composed of four proteins: P, T, L and H. Requires pyridoxal 5'-phosphate as cofactor.

It catalyses the reaction N(6)-[(R)-lipoyl]-L-lysyl-[glycine-cleavage complex H protein] + glycine + H(+) = N(6)-[(R)-S(8)-aminomethyldihydrolipoyl]-L-lysyl-[glycine-cleavage complex H protein] + CO2. Its function is as follows. The glycine cleavage system catalyzes the degradation of glycine. The P protein binds the alpha-amino group of glycine through its pyridoxal phosphate cofactor; CO(2) is released and the remaining methylamine moiety is then transferred to the lipoamide cofactor of the H protein. The chain is Glycine dehydrogenase (decarboxylating) from Stutzerimonas stutzeri (strain A1501) (Pseudomonas stutzeri).